Here is a 478-residue protein sequence, read N- to C-terminus: Solute carrier family 49 member 4 (478 aa).

The disordered stretch occupies residues 1–27; that stretch reads MGSGWSSEEEERQPLLGPGLGPAPGAA. Residues 1 to 51 are Cytoplasmic-facing; sequence MGSGWSSEEEERQPLLGPGLGPAPGAARRGREATAVLPAAGPNPGRVYGRR. The Di-leucine motif; mediates lysosomal localization motif lies at 15 to 16; it reads LL. Residues 52–72 form a helical membrane-spanning segment; the sequence is WLVLLLFSLLAFAQGLVWNTW. Residues 73–89 are Lumenal-facing; it reads GPIQNSARQAYGFSGWD. The helical transmembrane segment at 90–110 threads the bilayer; that stretch reads IALLVLWGPIGFLPCFAFMWL. Topologically, residues 111–117 are cytoplasmic; that stretch reads LDKRGLR. The helical transmembrane segment at 118 to 138 threads the bilayer; the sequence is VTVLLTSFLMVLGTGLRCIPV. Residues 139 to 152 are Lumenal-facing; the sequence is SDLALKKRLIHGGQ. A helical transmembrane segment spans residues 153–173; that stretch reads ILNGLAGPTVMNAAPFLSTTW. Residues 174–184 lie on the Cytoplasmic side of the membrane; sequence FSADERATATA. Residues 185–205 traverse the membrane as a helical segment; it reads IASMLSYLGGACAFLVGPLVV. Topologically, residues 206-229 are lumenal; sequence PAPNGTAPLLAAESSRAHIKDRIE. An N-linked (GlcNAc...) asparagine glycan is attached at N209. Residues 230 to 250 form a helical membrane-spanning segment; that stretch reads TVLYAEFGVVCLIFSATLAYF. Topologically, residues 251-281 are cytoplasmic; it reads PPRPPLPPSVAAASQRLSYRRSFCRLLSNLR. A helical transmembrane segment spans residues 282–302; that stretch reads FLMIALAYAIPLGVFAGWSGV. Residues 303–314 lie on the Lumenal side of the membrane; that stretch reads LDLILTPVHVSQ. Residues 315–335 form a helical membrane-spanning segment; the sequence is VDAGWIGFWSIVGGCVVGIAM. Topologically, residues 336 to 347 are cytoplasmic; sequence ARFADFIRGMLK. Residues 348 to 368 form a helical membrane-spanning segment; that stretch reads LILLLLFSGATLSSTWFTLTC. Residues 369-384 are Lumenal-facing; it reads LNSITHLPLTTVTLYA. Residues 385-405 traverse the membrane as a helical segment; sequence SCILLGVFLNSSVPIFFELFV. The Cytoplasmic segment spans residues 406–414; the sequence is ETVYPVPEG. A helical membrane pass occupies residues 415 to 435; it reads ITCGVVTFLSNMFMGVLLFFV. Topologically, residues 436-442 are lumenal; sequence TFYHTEL. A helical membrane pass occupies residues 443-463; sequence SWFNWCLPGSCLLSLLLILCF. Residues 464–478 lie on the Cytoplasmic side of the membrane; that stretch reads RESYDRLYLDVVVSV.

The protein belongs to the major facilitator superfamily. In terms of processing, cleaved in lysosomes by cathepsin L between Leu-214 and Ala-261, generating a N-glycosylated N-terminal and a non-glycosylated C-terminal fragment.

Its subcellular location is the lysosome membrane. The enzyme catalyses pyridoxine(out) + n H(+)(out) = pyridoxine(in) + n H(+)(in). In terms of biological role, mediates H(+)-dependent pyridoxine transport. In Mus musculus (Mouse), this protein is Solute carrier family 49 member 4 (Slc49a4).